Reading from the N-terminus, the 583-residue chain is MPRGLELLIAQTILQGFDAQYGRFLEVTSGAQQRFEQADWHAVQQAMKSRIHLYDHHVGLVVEQLRCITDGKSTDADFLLRVKEHYTRLLPDYPRFEIAESFFNSVYCRLFDHRSLTPERLFIFSSQPERRFRTIPRPLAKDFFPDHGWETLLMRILSDLPLRLPWQNKSRDIRYIIAHLTETLGEDALPRCHVQVANELFYRNKAAWLVGKLTTPDGTLPFLLPIHRTDEGELFVDTCLTTTAEASIVFGFARSYFMVYAPLPAALVEWLREILPGKTTAELYMAIGCQKHAKTESYREYLCYLAESDEKFIEAPGIRGMVMLVFTLPGFDRVFKIIKDKFAPQKEMSAAHVRACYQLVKEHDRVGRMADTQEFENFVLDKRQIDPALMALLRQEAPEKITDLGEHIVIRHLYIERRMVPLNIWLEQVEGQQLRDAIEEYGNAIRQLAAANIFPGDMLFKNFGVTRHGRVVFYDYDEICYMTEVNFRDIPPARYPEDELASEPWYSVSPGDVFPEEFRHWLCADPRIGPLFEEMHADLFRADYWRALQTRIKEGHVEDVYAYRRRQRFSVRYGAISSTANSS.

Residues 315-321 (APGIRGM) and lysine 336 each bind ATP. Residue aspartate 371 is part of the active site.

This sequence belongs to the AceK family.

The protein resides in the cytoplasm. The enzyme catalyses L-seryl-[isocitrate dehydrogenase] + ATP = O-phospho-L-seryl-[isocitrate dehydrogenase] + ADP + H(+). Its function is as follows. Bifunctional enzyme which can phosphorylate or dephosphorylate isocitrate dehydrogenase (IDH) on a specific serine residue. This is a regulatory mechanism which enables bacteria to bypass the Krebs cycle via the glyoxylate shunt in response to the source of carbon. When bacteria are grown on glucose, IDH is fully active and unphosphorylated, but when grown on acetate or ethanol, the activity of IDH declines drastically concomitant with its phosphorylation. The polypeptide is Isocitrate dehydrogenase kinase/phosphatase (Salmonella paratyphi C (strain RKS4594)).